A 695-amino-acid polypeptide reads, in one-letter code: Ubiquitin carboxyl-terminal hydrolase 20 (695 aa).

2 disordered regions span residues 1–20 and 42–162; these read MLMA…SSIL and SLAL…SLFY. 2 stretches are compositionally biased toward low complexity: residues 9–20 and 61–86; these read PSSILPRSSSIL and NHDS…SQSV. The segment covering 112–124 has biased composition (acidic residues); that stretch reads DDIDDDIWGDDDL. The USP domain maps to 176-476; the sequence is AGLWNLGNSC…DSYILFYARE (301 aa). The active-site Nucleophile is C185. Catalysis depends on H435, which acts as the Proton acceptor. Positions 556–571 are enriched in low complexity; it reads SAESSSGEESPMGELL. 2 disordered regions span residues 556 to 585 and 674 to 695; these read SAES…PCTE and AREL…LKTT.

This sequence belongs to the peptidase C19 family.

It catalyses the reaction Thiol-dependent hydrolysis of ester, thioester, amide, peptide and isopeptide bonds formed by the C-terminal Gly of ubiquitin (a 76-residue protein attached to proteins as an intracellular targeting signal).. Functionally, recognizes and hydrolyzes the peptide bond at the C-terminal Gly of ubiquitin. Involved in the processing of poly-ubiquitin precursors as well as that of ubiquitinated proteins. This chain is Ubiquitin carboxyl-terminal hydrolase 20 (UBP20), found in Arabidopsis thaliana (Mouse-ear cress).